We begin with the raw amino-acid sequence, 288 residues long: Pirin-like protein CC_3178 (288 aa).

This sequence belongs to the pirin family.

The sequence is that of Pirin-like protein CC_3178 from Caulobacter vibrioides (strain ATCC 19089 / CIP 103742 / CB 15) (Caulobacter crescentus).